The chain runs to 550 residues: tRNA modification GTPase MnmE (550 aa).

3 residues coordinate (6S)-5-formyl-5,6,7,8-tetrahydrofolate: Arg20, Glu78, and Arg116. The TrmE-type G domain maps to 212–478; that stretch reads GFSVVIVGKP…LLDKIFDIIS (267 aa). Asn222 lines the K(+) pocket. GTP contacts are provided by residues 222-227, 241-247, and 266-269; these read NVGKST, TDIPGTT, and DTAG. Ser226 is a Mg(2+) binding site. K(+) contacts are provided by Thr241, Ile243, and Thr246. A Mg(2+)-binding site is contributed by Thr247. Position 550 (Lys550) interacts with (6S)-5-formyl-5,6,7,8-tetrahydrofolate.

This sequence belongs to the TRAFAC class TrmE-Era-EngA-EngB-Septin-like GTPase superfamily. TrmE GTPase family. As to quaternary structure, homodimer. Heterotetramer of two MnmE and two MnmG subunits. It depends on K(+) as a cofactor.

It localises to the cytoplasm. Its function is as follows. Exhibits a very high intrinsic GTPase hydrolysis rate. Involved in the addition of a carboxymethylaminomethyl (cmnm) group at the wobble position (U34) of certain tRNAs, forming tRNA-cmnm(5)s(2)U34. The polypeptide is tRNA modification GTPase MnmE (Neorickettsia sennetsu (strain ATCC VR-367 / Miyayama) (Ehrlichia sennetsu)).